Reading from the N-terminus, the 156-residue chain is Crossover junction endodeoxyribonuclease RuvC (156 aa).

Active-site residues include D7, E67, and D139. Residues D7, E67, and D139 each coordinate Mg(2+).

The protein belongs to the RuvC family. In terms of assembly, homodimer which binds Holliday junction (HJ) DNA. The HJ becomes 2-fold symmetrical on binding to RuvC with unstacked arms; it has a different conformation from HJ DNA in complex with RuvA. In the full resolvosome a probable DNA-RuvA(4)-RuvB(12)-RuvC(2) complex forms which resolves the HJ. The cofactor is Mg(2+).

Its subcellular location is the cytoplasm. It catalyses the reaction Endonucleolytic cleavage at a junction such as a reciprocal single-stranded crossover between two homologous DNA duplexes (Holliday junction).. Its function is as follows. The RuvA-RuvB-RuvC complex processes Holliday junction (HJ) DNA during genetic recombination and DNA repair. Endonuclease that resolves HJ intermediates. Cleaves cruciform DNA by making single-stranded nicks across the HJ at symmetrical positions within the homologous arms, yielding a 5'-phosphate and a 3'-hydroxyl group; requires a central core of homology in the junction. The consensus cleavage sequence is 5'-(A/T)TT(C/G)-3'. Cleavage occurs on the 3'-side of the TT dinucleotide at the point of strand exchange. HJ branch migration catalyzed by RuvA-RuvB allows RuvC to scan DNA until it finds its consensus sequence, where it cleaves and resolves the cruciform DNA. This chain is Crossover junction endodeoxyribonuclease RuvC, found in Sphingopyxis alaskensis (strain DSM 13593 / LMG 18877 / RB2256) (Sphingomonas alaskensis).